A 146-amino-acid polypeptide reads, in one-letter code: 3-hydroxyacyl-[acyl-carrier-protein] dehydratase FabZ (146 aa).

H51 is an active-site residue.

This sequence belongs to the thioester dehydratase family. FabZ subfamily.

Its subcellular location is the cytoplasm. It catalyses the reaction a (3R)-hydroxyacyl-[ACP] = a (2E)-enoyl-[ACP] + H2O. Functionally, involved in unsaturated fatty acids biosynthesis. Catalyzes the dehydration of short chain beta-hydroxyacyl-ACPs and long chain saturated and unsaturated beta-hydroxyacyl-ACPs. In Staphylococcus aureus (strain Mu3 / ATCC 700698), this protein is 3-hydroxyacyl-[acyl-carrier-protein] dehydratase FabZ.